A 182-amino-acid chain; its full sequence is Large ribosomal subunit protein uL6 (182 aa).

Belongs to the universal ribosomal protein uL6 family. Part of the 50S ribosomal subunit.

This protein binds to the 23S rRNA, and is important in its secondary structure. It is located near the subunit interface in the base of the L7/L12 stalk, and near the tRNA binding site of the peptidyltransferase center. The polypeptide is Large ribosomal subunit protein uL6 (Dehalococcoides mccartyi (strain CBDB1)).